The following is a 129-amino-acid chain: Translation initiation factor 5A (129 aa).

Lys36 is modified (hypusine).

This sequence belongs to the eIF-5A family.

The protein localises to the cytoplasm. Functions by promoting the formation of the first peptide bond. The sequence is that of Translation initiation factor 5A from Picrophilus torridus (strain ATCC 700027 / DSM 9790 / JCM 10055 / NBRC 100828 / KAW 2/3).